The following is a 62-amino-acid chain: Defensin BmKDfsin6 (62 aa).

An N-terminal signal peptide occupies residues 1 to 24; the sequence is MKVIAILFLLAFVLCTMEITMVEA. Cystine bridges form between Cys28-Cys49, Cys35-Cys57, and Cys39-Cys59.

This sequence belongs to the invertebrate defensin family. Type 2 subfamily. Highly expressed in non-venom gland (hemolymph) and moderately expressed in venom gland.

The protein localises to the secreted. In terms of biological role, antibacterial peptide active against Gram-positive bacteria, but not on Gram-negative bacteria. Also has weak blocking activity on Kv1.1/KCNA1, Kv1.2/KCNA2, Kv1.3/KCNA3, KCa3.1/KCNN4/IK, KCa2.3/KCNN3/SK3 and Kv11.1/KCNH2/ERG1 channels (tested at 1 uM). It inhibits potassium channel current by interacting with the pore region. In Olivierus martensii (Manchurian scorpion), this protein is Defensin BmKDfsin6.